The chain runs to 111 residues: Phosphoribosyl-ATP pyrophosphatase (111 aa).

The protein belongs to the PRA-PH family.

It localises to the cytoplasm. It catalyses the reaction 1-(5-phospho-beta-D-ribosyl)-ATP + H2O = 1-(5-phospho-beta-D-ribosyl)-5'-AMP + diphosphate + H(+). The protein operates within amino-acid biosynthesis; L-histidine biosynthesis; L-histidine from 5-phospho-alpha-D-ribose 1-diphosphate: step 2/9. The sequence is that of Phosphoribosyl-ATP pyrophosphatase from Pseudomonas putida (strain ATCC 700007 / DSM 6899 / JCM 31910 / BCRC 17059 / LMG 24140 / F1).